Reading from the N-terminus, the 161-residue chain is Nucleotide-binding protein Gura_0717 (161 aa).

The protein belongs to the YajQ family.

Functionally, nucleotide-binding protein. In Geotalea uraniireducens (strain Rf4) (Geobacter uraniireducens), this protein is Nucleotide-binding protein Gura_0717.